Here is a 531-residue protein sequence, read N- to C-terminus: Putative heme-binding protein HQ_1094A (531 aa).

A heme-binding site is contributed by His177. Residues 269 to 340 (AHGEAHGHAH…STNTNTQDSE (72 aa)) are disordered. Over residues 271-281 (GEAHGHAHGDS) the composition is skewed to basic and acidic residues. Residues 284–306 (GSGGGGGSSHGQSPGGASAGGSA) show a composition bias toward gly residues. The span at 308-317 (GTEDADHSDS) shows a compositional bias: basic and acidic residues. A compositionally biased stretch (low complexity) spans 318 to 338 (RSTTSADTTQSDTSTNTNTQD). Residues 441-529 (GTMGMFYTVK…VLSERPRHVF (89 aa)) enclose the ABM domain.

In the N-terminal section; belongs to the ChdC family.

The protein is Putative heme-binding protein HQ_1094A of Haloquadratum walsbyi (strain DSM 16790 / HBSQ001).